A 324-amino-acid chain; its full sequence is Malate dehydrogenase (324 aa).

NAD(+)-binding positions include 7-13 (GAAGGIG) and aspartate 34. 2 residues coordinate substrate: arginine 88 and arginine 94. NAD(+) is bound by residues asparagine 101 and 124–126 (VTN). Residues asparagine 126 and arginine 160 each coordinate substrate. Histidine 184 serves as the catalytic Proton acceptor. Position 238 (methionine 238) interacts with NAD(+).

This sequence belongs to the LDH/MDH superfamily. MDH type 1 family. In terms of assembly, homodimer.

It carries out the reaction (S)-malate + NAD(+) = oxaloacetate + NADH + H(+). Functionally, catalyzes the reversible oxidation of malate to oxaloacetate. The chain is Malate dehydrogenase from Haemophilus ducreyi (strain 35000HP / ATCC 700724).